Consider the following 521-residue polypeptide: Maturase K (521 aa).

The protein belongs to the intron maturase 2 family. MatK subfamily.

The protein localises to the plastid. Its subcellular location is the chloroplast. Its function is as follows. Usually encoded in the trnK tRNA gene intron. Probably assists in splicing its own and other chloroplast group II introns. The polypeptide is Maturase K (Anthericum liliago (St-Bernard's lily)).